The sequence spans 249 residues: Proteasome activator complex subunit 1 (249 aa).

The tract at residues 60-101 is disordered; sequence PLDIPVPDPVKEKEKGERKKQQEKEDKDEKKKGEDEDKGPPC. A compositionally biased stretch (basic and acidic residues) spans 68–98; that stretch reads PVKEKEKGERKKQQEKEDKDEKKKGEDEDKG.

This sequence belongs to the PA28 family. Heterodimer of PSME1 and PSME2, which forms a hexameric ring. PSME1 can form homoheptamers.

Its function is as follows. Implicated in immunoproteasome assembly and required for efficient antigen processing. The PA28 activator complex enhances the generation of class I binding peptides by altering the cleavage pattern of the proteasome. The chain is Proteasome activator complex subunit 1 (PSME1) from Macaca fascicularis (Crab-eating macaque).